A 381-amino-acid chain; its full sequence is MSNPSPQVPEEEASTSVCRPKSSMASTSRRQRRERRFRRYLSAGRLVRAQALLQRHPGLDVDAGQPPPLHRACARHDAPALCLLLRLGADPAHQDRHGDTALHAAARQGPDAYTDFFLPLLSRCPSAMGIKNKDGETPGQILGWGPPWDSAEEEEEDDASKEREWRQKLQGELEDEWQEVMGRFEGDASHETQEPESFSAWSDRLAREHAQKCQQQQREAEGSCRPPRAEGSSQSWRQQEEEQRLFRERARVKEEELRESRARRAQEALGDREPKPARAGPRAEHPRGAGRGSLWRFGDVPWPCPGGGDPEAMAAALVARGPPLEEQGALRRYLRVQQVRWHPDRFLQRFRSQIETWELGRVMGAVTALSQALNRHAEALK.

The segment at 1 to 34 (MSNPSPQVPEEEASTSVCRPKSSMASTSRRQRRE) is disordered. ANK repeat units lie at residues 64–93 (GQPPPLHRACARHDAPALCLLLRLGADPAH) and 97–133 (HGDTALHAAARQGPDAYTDFFLPLLSRCPSAMGIKNK). Disordered regions lie at residues 131–167 (KNKDGETPGQILGWGPPWDSAEEEEEDDASKEREWRQ), 186–242 (GDAS…QEEE), and 256–294 (ELRESRARRAQEALGDREPKPARAGPRAEHPRGAGRGSL). Position 150 is a phosphoserine (Ser150). The segment covering 150 to 159 (SAEEEEEDDA) has biased composition (acidic residues). Residues 256–287 (ELRESRARRAQEALGDREPKPARAGPRAEHPR) show a composition bias toward basic and acidic residues.

As to quaternary structure, interacts with CACTIN (via N-terminal domain); the interaction occurs in a pro-inflammatory-independent manner.

The protein resides in the nucleus. In terms of biological role, involved in the regulation of innate immune response. Acts as negative regulator of Toll-like receptor and interferon-regulatory factor (IRF) signaling pathways. Contributes to the negative regulation of transcriptional activation of NF-kappa-B target genes in response to endogenous pro-inflammatory stimuli. The chain is NF-kappa-B inhibitor-like protein 1 (NFKBIL1) from Macaca mulatta (Rhesus macaque).